Here is a 105-residue protein sequence, read N- to C-terminus: ATP synthase F(0) complex subunit a (105 aa).

A run of 3 helical transmembrane segments spans residues Glu14–Ile34, Leu47–Met67, and Ala72–Ile92.

Belongs to the ATPase A chain family. Component of the ATP synthase complex composed at least of ATP5F1A/subunit alpha, ATP5F1B/subunit beta, ATP5MC1/subunit c (homooctomer), MT-ATP6/subunit a, MT-ATP8/subunit 8, ATP5ME/subunit e, ATP5MF/subunit f, ATP5MG/subunit g, ATP5MK/subunit k, ATP5MJ/subunit j, ATP5F1C/subunit gamma, ATP5F1D/subunit delta, ATP5F1E/subunit epsilon, ATP5PF/subunit F6, ATP5PB/subunit b, ATP5PD/subunit d, ATP5PO/subunit OSCP. ATP synthase complex consists of a soluble F(1) head domain (subunits alpha(3) and beta(3)) - the catalytic core - and a membrane F(0) domain - the membrane proton channel (subunits c, a, 8, e, f, g, k and j). These two domains are linked by a central stalk (subunits gamma, delta, and epsilon) rotating inside the F1 region and a stationary peripheral stalk (subunits F6, b, d, and OSCP). Interacts with DNAJC30; interaction is direct.

The protein localises to the mitochondrion inner membrane. It carries out the reaction H(+)(in) = H(+)(out). In terms of biological role, subunit a, of the mitochondrial membrane ATP synthase complex (F(1)F(0) ATP synthase or Complex V) that produces ATP from ADP in the presence of a proton gradient across the membrane which is generated by electron transport complexes of the respiratory chain. ATP synthase complex consist of a soluble F(1) head domain - the catalytic core - and a membrane F(1) domain - the membrane proton channel. These two domains are linked by a central stalk rotating inside the F(1) region and a stationary peripheral stalk. During catalysis, ATP synthesis in the catalytic domain of F(1) is coupled via a rotary mechanism of the central stalk subunits to proton translocation. With the subunit c (ATP5MC1), forms the proton-conducting channel in the F(0) domain, that contains two crucial half-channels (inlet and outlet) that facilitate proton movement from the mitochondrial intermembrane space (IMS) into the matrix. Protons are taken up via the inlet half-channel and released through the outlet half-channel, following a Grotthuss mechanism. The polypeptide is ATP synthase F(0) complex subunit a (Salmo trutta (Brown trout)).